We begin with the raw amino-acid sequence, 238 residues long: 3-dehydroquinate dehydratase (238 aa).

Residues 35 to 37 (ELR) and Arg70 contribute to the 3-dehydroquinate site. His133 acts as the Proton donor/acceptor in catalysis. Lys160 acts as the Schiff-base intermediate with substrate in catalysis. Arg202 and Gln225 together coordinate 3-dehydroquinate.

It belongs to the type-I 3-dehydroquinase family. In terms of assembly, homodimer.

The enzyme catalyses 3-dehydroquinate = 3-dehydroshikimate + H2O. It participates in metabolic intermediate biosynthesis; chorismate biosynthesis; chorismate from D-erythrose 4-phosphate and phosphoenolpyruvate: step 3/7. In terms of biological role, involved in the third step of the chorismate pathway, which leads to the biosynthesis of aromatic amino acids. Catalyzes the cis-dehydration of 3-dehydroquinate (DHQ) and introduces the first double bond of the aromatic ring to yield 3-dehydroshikimate. The protein is 3-dehydroquinate dehydratase of Staphylococcus aureus (strain bovine RF122 / ET3-1).